Reading from the N-terminus, the 196-residue chain is Superantigen-like protein 11 (196 aa).

The sialyl Lewis X-binding stretch occupies residues 65-167 (LDVFVVREGS…RVTMKNGDFY (103 aa)).

Belongs to the staphylococcal/streptococcal toxin family. Homodimer (via its C-terminal domain). Interacts with host FCAR and SELPLG (via sialyl Lewis X).

It is found in the secreted. Its function is as follows. Secreted protein that plays a role in the inhibition of host immune system. Targets myeloid cells such as monocytes or granulocytes through binding with sialyllactosamine-containing glycoproteins. Prevents initial rolling of neutrophils toward the site of infection by interacting with host SELPLG. Disrupts neutrophil motility by induction of cell adhesion via interacting with glycans but independently of SELPLG. This is Superantigen-like protein 11 from Staphylococcus aureus.